A 90-amino-acid chain; its full sequence is Protein RALF-like 29 (90 aa).

An N-terminal signal peptide occupies residues 1–25 (MIKTKEVTFVTILIVLCVFISTIHA). Intrachain disulfides connect Cys41–Cys50 and Cys63–Cys69.

This sequence belongs to the plant rapid alkalinization factor (RALF) family.

The protein localises to the secreted. Functionally, cell signaling peptide that may regulate plant stress, growth, and development. Mediates a rapid alkalinization of extracellular space by mediating a transient increase in the cytoplasmic Ca(2+) concentration leading to a calcium-dependent signaling events through a cell surface receptor and a concomitant activation of some intracellular mitogen-activated protein kinases. The polypeptide is Protein RALF-like 29 (RALFL29) (Arabidopsis thaliana (Mouse-ear cress)).